Reading from the N-terminus, the 338-residue chain is Lipoate-protein ligase A (338 aa).

Positions 29 to 216 constitute a BPL/LPL catalytic domain; that stretch reads PATQRVLFLW…AFFAHYGERV (188 aa). Residues Arg-71, 76-79, and Lys-134 each bind ATP; that span reads GAVF. Residue Lys-134 participates in (R)-lipoate binding.

Belongs to the LplA family. Monomer.

It localises to the cytoplasm. It carries out the reaction L-lysyl-[lipoyl-carrier protein] + (R)-lipoate + ATP = N(6)-[(R)-lipoyl]-L-lysyl-[lipoyl-carrier protein] + AMP + diphosphate + H(+). It participates in protein modification; protein lipoylation via exogenous pathway; protein N(6)-(lipoyl)lysine from lipoate: step 1/2. It functions in the pathway protein modification; protein lipoylation via exogenous pathway; protein N(6)-(lipoyl)lysine from lipoate: step 2/2. Its function is as follows. Catalyzes both the ATP-dependent activation of exogenously supplied lipoate to lipoyl-AMP and the transfer of the activated lipoyl onto the lipoyl domains of lipoate-dependent enzymes. In Escherichia coli O1:K1 / APEC, this protein is Lipoate-protein ligase A.